A 290-amino-acid chain; its full sequence is MIYYGTMFDHKVRFSIVRMREVVEEARNRHALSYLATVVLGRALIGAALVTPWLAEKERWTLDIEGNGPIRRVVAQSTSEFTVRGYVANPKVELPLNEKGKFDVAGAIGQGVLRVVRDLGLKTPFVSQVPLVSGEIAEDLAYYFAVSEQIPSAFSIGVLVDSDGVKIAGGFAVQIIDRTLEQEKVEMIEKNIKNLPSISKLFQEAEPLDVLERIFGEKVGFVETAEIKYKCDCNREKAKNALLVLDKKELEDMRKEGKGEVVCKWCNTRYVFSEEELEELLKFKVDDSGS.

2 cysteine pairs are disulfide-bonded: C231-C233 and C263-C266.

It belongs to the HSP33 family. Under oxidizing conditions two disulfide bonds are formed involving the reactive cysteines. Under reducing conditions zinc is bound to the reactive cysteines and the protein is inactive.

The protein resides in the cytoplasm. In terms of biological role, redox regulated molecular chaperone. Protects both thermally unfolding and oxidatively damaged proteins from irreversible aggregation. Plays an important role in the bacterial defense system toward oxidative stress. The chain is 33 kDa chaperonin from Thermotoga maritima (strain ATCC 43589 / DSM 3109 / JCM 10099 / NBRC 100826 / MSB8).